We begin with the raw amino-acid sequence, 145 residues long: D-aminoacyl-tRNA deacylase (145 aa).

A Gly-cisPro motif, important for rejection of L-amino acids motif is present at residues 137–138 (GP).

Belongs to the DTD family. In terms of assembly, homodimer.

It is found in the cytoplasm. It catalyses the reaction glycyl-tRNA(Ala) + H2O = tRNA(Ala) + glycine + H(+). The catalysed reaction is a D-aminoacyl-tRNA + H2O = a tRNA + a D-alpha-amino acid + H(+). Functionally, an aminoacyl-tRNA editing enzyme that deacylates mischarged D-aminoacyl-tRNAs. Also deacylates mischarged glycyl-tRNA(Ala), protecting cells against glycine mischarging by AlaRS. Acts via tRNA-based rather than protein-based catalysis; rejects L-amino acids rather than detecting D-amino acids in the active site. By recycling D-aminoacyl-tRNA to D-amino acids and free tRNA molecules, this enzyme counteracts the toxicity associated with the formation of D-aminoacyl-tRNA entities in vivo and helps enforce protein L-homochirality. The polypeptide is D-aminoacyl-tRNA deacylase (Dichelobacter nodosus (strain VCS1703A)).